The primary structure comprises 83 residues: UPF0297 protein DSY2420 (83 aa).

The protein belongs to the UPF0297 family.

In Desulfitobacterium hafniense (strain Y51), this protein is UPF0297 protein DSY2420.